The following is a 276-amino-acid chain: Protein canopy homolog 3 (276 aa).

Residues 1-26 form the signal peptide; it reads MESMSELAPRCLLFPLLLLLPLLLLP. The Saposin B-type domain maps to 47 to 269; sequence SKCEVCKYVA…EGVQKASPLP (223 aa). 3 cysteine pairs are disulfide-bonded: C49/C206, C52/C194, and C104/C166. N153 is a glycosylation site (N-linked (GlcNAc...) asparagine). Positions 153–179 form a coiled coil; it reads NETSAEVADLKKQCDVLVEEFEEVIED. Positions 218–276 are disordered; that stretch reads IASLGGKKSKKKRSGVKGSSSGSSKQRKELGGLGEDANAEEEEGVQKASPLPHSPPDEL.

The protein belongs to the canopy family. Interacts with HSP90B1; this interaction is disrupted in the presence of ATP. Interacts with TLR1, TLR2, TLR4 and TLR9. Strongest interaction with TLR4.

It localises to the endoplasmic reticulum. Functionally, toll-like receptor (TLR)-specific co-chaperone for HSP90B1. Required for proper TLR folding, except that of TLR3, and hence controls TLR exit from the endoplasmic reticulum. Consequently, required for both innate and adaptive immune responses. In Mus musculus (Mouse), this protein is Protein canopy homolog 3 (Cnpy3).